The chain runs to 319 residues: Nuclear hormone receptor family member nhr-174 (319 aa).

A DNA-binding region (nuclear receptor) is located at residues 7–81 (DPVCPVCEFP…AGMKRNLVRQ (75 aa)). 2 consecutive NR C4-type zinc fingers follow at residues 10–31 (CPVC…CGAC) and 47–63 (CEKK…CRAC). Residues 130–319 (EAEKDVSKIL…SMKKSRYLQF (190 aa)) enclose the NR LBD domain.

It belongs to the nuclear hormone receptor family.

It localises to the nucleus. Orphan nuclear receptor. This is Nuclear hormone receptor family member nhr-174 (nhr-174) from Caenorhabditis elegans.